The sequence spans 404 residues: Argininosuccinate synthase (404 aa).

9–17 contributes to the ATP binding site; it reads AYSGGLDTS. Tyr-86 lines the L-citrulline pocket. Residue Gly-116 participates in ATP binding. L-aspartate-binding residues include Thr-118, Asn-122, and Asp-123. Residue Asn-122 coordinates L-citrulline. Positions 126, 174, 183, 259, and 271 each coordinate L-citrulline.

This sequence belongs to the argininosuccinate synthase family. Type 1 subfamily. Homotetramer.

The protein localises to the cytoplasm. It carries out the reaction L-citrulline + L-aspartate + ATP = 2-(N(omega)-L-arginino)succinate + AMP + diphosphate + H(+). The protein operates within amino-acid biosynthesis; L-arginine biosynthesis; L-arginine from L-ornithine and carbamoyl phosphate: step 2/3. This is Argininosuccinate synthase from Listeria monocytogenes serovar 1/2a (strain ATCC BAA-679 / EGD-e).